We begin with the raw amino-acid sequence, 377 residues long: Carbonic anhydrase 1 (377 aa).

The N-terminal stretch at 1–20 is a signal peptide; sequence MARTGALLLVALALAGCAQA. The region spanning 38–318 is the Alpha-carbonic anhydrase domain; sequence DHWDHGLNGE…HHHRRLLHNH (281 aa). Intrachain disulfides connect Cys61/Cys264, Cys194/Cys198, and Cys296/Cys351. Asn101 is a glycosylation site (N-linked (GlcNAc...) asparagine). The Proton acceptor role is filled by His112. Asn135 carries N-linked (GlcNAc...) asparagine glycosylation. Residues His163, His165, and His182 each coordinate Zn(2+). Substrate-binding positions include Thr260 and 260–261; that span reads TT. An N-linked (GlcNAc...) asparagine glycan is attached at Asn297.

Belongs to the alpha-carbonic anhydrase family. As to quaternary structure, tetramer of two large and two small subunits linked by two disulfide bonds. The cofactor is Zn(2+).

It is found in the periplasm. The catalysed reaction is hydrogencarbonate + H(+) = CO2 + H2O. In terms of biological role, reversible hydration of carbon dioxide. This Chlamydomonas reinhardtii (Chlamydomonas smithii) protein is Carbonic anhydrase 1 (CAH1).